A 399-amino-acid polypeptide reads, in one-letter code: S-adenosylmethionine synthase (399 aa).

H17 provides a ligand contact to ATP. D19 is a binding site for Mg(2+). E52 provides a ligand contact to K(+). L-methionine-binding residues include E65 and Q109. Residues 109–119 are flexible loop; the sequence is QSADIAQGVDA. ATP contacts are provided by residues 177–179, 243–244, D252, 258–259, A275, and K279; these read DSK, KF, and RK. D252 lines the L-methionine pocket. K283 is a binding site for L-methionine.

It belongs to the AdoMet synthase family. As to quaternary structure, homotetramer; dimer of dimers. Requires Mg(2+) as cofactor. K(+) is required as a cofactor.

It localises to the cytoplasm. The enzyme catalyses L-methionine + ATP + H2O = S-adenosyl-L-methionine + phosphate + diphosphate. Its pathway is amino-acid biosynthesis; S-adenosyl-L-methionine biosynthesis; S-adenosyl-L-methionine from L-methionine: step 1/1. Catalyzes the formation of S-adenosylmethionine (AdoMet) from methionine and ATP. The overall synthetic reaction is composed of two sequential steps, AdoMet formation and the subsequent tripolyphosphate hydrolysis which occurs prior to release of AdoMet from the enzyme. The chain is S-adenosylmethionine synthase from Bradyrhizobium sp. (strain BTAi1 / ATCC BAA-1182).